Consider the following 220-residue polypeptide: NADH-quinone oxidoreductase subunit I (220 aa).

2 consecutive 4Fe-4S ferredoxin-type domains span residues 71-102 and 112-141; these read LQRL…IITH and DSYT…MGNR. Residues cysteine 82, cysteine 85, cysteine 88, cysteine 92, cysteine 121, cysteine 124, cysteine 127, and cysteine 131 each coordinate [4Fe-4S] cluster. The disordered stretch occupies residues 187-220; it reads MQATPLDYVQEPSKEESKEETPTNPESNKGDENV. A compositionally biased stretch (basic and acidic residues) spans 198–207; sequence PSKEESKEET.

Belongs to the complex I 23 kDa subunit family. NDH-1 is composed of 14 different subunits. Subunits NuoA, H, J, K, L, M, N constitute the membrane sector of the complex. [4Fe-4S] cluster serves as cofactor.

Its subcellular location is the cell inner membrane. It catalyses the reaction a quinone + NADH + 5 H(+)(in) = a quinol + NAD(+) + 4 H(+)(out). Functionally, NDH-1 shuttles electrons from NADH, via FMN and iron-sulfur (Fe-S) centers, to quinones in the respiratory chain. The immediate electron acceptor for the enzyme in this species is believed to be ubiquinone. Couples the redox reaction to proton translocation (for every two electrons transferred, four hydrogen ions are translocated across the cytoplasmic membrane), and thus conserves the redox energy in a proton gradient. The sequence is that of NADH-quinone oxidoreductase subunit I from Helicobacter pylori (strain Shi470).